A 331-amino-acid polypeptide reads, in one-letter code: UPF0284 protein PF0303 (331 aa).

The protein belongs to the UPF0284 family.

This chain is UPF0284 protein PF0303, found in Pyrococcus furiosus (strain ATCC 43587 / DSM 3638 / JCM 8422 / Vc1).